The sequence spans 730 residues: MARDPKHDILFEPIQIGPKTLRNRFYQVPHCIGAGSDKPGFQSAHRSVKAEGGWAALNTEYCSINPESDDTHRLSARIWDEGDVRNLKAMTDEVHKYGALAGVELWYGGAHAPNMESRATPRGPSQYASEFETLSYCKEMDLSDIAQVQQFYVDAAKRSRDAGFDIVYVYGAHSYLPLQFLNPYYNKRTDKYGGSLENRARFWLETLEKVKHAVGSDCAIATRFGVDTVYGPGQIEAEVDGQKFVEMADSLVDMWDITIGDIAEWGEDAGPSRFYQQGHTIPWVKLVKQVSKKPVLGVGRYTDPEKMIEIVTKGYADIIGCARPSIADPFLPQKVEQGRYDDIRVCIGCNVCISRWEIGGPPMICTQNATAGEEYRRGWHPEKFRQTKNKDSVLIVGAGPSGSEAARVLMESGYTVHLTDTAEKIGGHLNQVAALPGLGEWSYHRDYRETQITKLLKKNKESQLALGQKPMTADDVLQYGADKVIIATGARWNTDGTNCLTHDPIPGADASLPDQLTPEQVMDGKKKIGKRVVILNADTYFMAPSLAEKLATAGHEVTIVSGVHLANYMHFTLEYPNMMRRLHELHVEELGDHFCSRIEPGRMEIYNIWGDGSKRTYRGPGVSPRDANTSHRWIEFDSLVLVTGRHSECTLWNELKARESEWAENDIKGIYLIGDAEAPRLIADATFTGHRVAREIEEANPQIAIPYKRETIAWGTPHMPGGNFKIEYKV.

Residues Pro29, Cys31, Tyr61, and Glu104 each contribute to the FMN site. An S-6-FMN cysteine modification is found at Cys31. Position 170-173 (170-173) interacts with substrate; that stretch reads YGAH. The active-site Proton donor is Tyr175. Residues Arg223, Asp268, Arg300, Ala322, and Arg323 each coordinate FMN. [4Fe-4S] cluster-binding residues include Cys346, Cys349, Cys352, and Cys365. The ADP site is built by Ser401, Asp420, Thr421, His428, Met471, and Asp675.

In the N-terminal section; belongs to the NADH:flavin oxidoreductase/NADH oxidase family. As to quaternary structure, homodimer. Forms a ternary complex with the heterodimeric electron transfer flavoprotein. FMN serves as cofactor. [4Fe-4S] cluster is required as a cofactor.

The enzyme catalyses trimethylamine + oxidized [electron-transfer flavoprotein] + H2O + H(+) = dimethylamine + reduced [electron-transfer flavoprotein] + formaldehyde. In Methylophilus methylotrophus (Bacterium W3A1), this protein is Trimethylamine dehydrogenase.